Here is a 436-residue protein sequence, read N- to C-terminus: Serine protease hepsin (436 aa).

The tract at residues 1–29 is disordered; the sequence is MAKEDEEPGAHRGGSTCSRPQPGKGGRTA. Residues 1 to 38 lie on the Cytoplasmic side of the membrane; it reads MAKEDEEPGAHRGGSTCSRPQPGKGGRTAACCSRPKVA. A helical; Signal-anchor for type II membrane protein membrane pass occupies residues 39–59; the sequence is ALIVGTLLFLTGIGAASWAIV. Residues 60 to 436 are Extracellular-facing; that stretch reads TILLQSDQEP…SEASGMVTQP (377 aa). Positions 73–170 constitute an SRCR domain; it reads VQLSPGDSRL…RGRFLTATCQ (98 aa). 8 disulfides stabilise this stretch: Cys-96–Cys-159, Cys-109–Cys-169, Cys-138–Cys-157, Cys-172–Cys-296, Cys-207–Cys-223, Cys-310–Cys-378, Cys-341–Cys-357, and Cys-368–Cys-400. Residue Asn-131 is glycosylated (N-linked (GlcNAc...) asparagine). The region spanning 182-424 is the Peptidase S1 domain; it reads IVGGQDSSLG…FREWIFKAIK (243 aa). Residues His-222 and Asp-276 each act as charge relay system in the active site. The active-site Charge relay system is Ser-372.

This sequence belongs to the peptidase S1 family. Detected in kidney, in thick ascending tubule epithelial cells (at protein level). Detected in kidney and liver.

It localises to the apical cell membrane. It is found in the cell membrane. The protein localises to the secreted. The enzyme catalyses Cleavage after basic amino-acid residues, with Arg strongly preferred to Lys.. Serine protease that cleaves extracellular substrates, and contributes to the proteolytic processing of growth factors, such as HGF and MST1/HGFL. Plays a role in cell growth and maintenance of cell morphology. Plays a role in the proteolytic processing of ACE2. Mediates the proteolytic cleavage of urinary UMOD that is required for UMOD polymerization. The chain is Serine protease hepsin (Hpn) from Mus musculus (Mouse).